Here is a 426-residue protein sequence, read N- to C-terminus: Histidine--tRNA ligase (426 aa).

Belongs to the class-II aminoacyl-tRNA synthetase family. Homodimer.

It localises to the cytoplasm. It carries out the reaction tRNA(His) + L-histidine + ATP = L-histidyl-tRNA(His) + AMP + diphosphate + H(+). The chain is Histidine--tRNA ligase from Shewanella baltica (strain OS195).